The following is a 176-amino-acid chain: Large ribosomal subunit protein uL6 (176 aa).

Belongs to the universal ribosomal protein uL6 family. Part of the 50S ribosomal subunit.

Functionally, this protein binds to the 23S rRNA, and is important in its secondary structure. It is located near the subunit interface in the base of the L7/L12 stalk, and near the tRNA binding site of the peptidyltransferase center. This is Large ribosomal subunit protein uL6 from Burkholderia ambifaria (strain ATCC BAA-244 / DSM 16087 / CCUG 44356 / LMG 19182 / AMMD) (Burkholderia cepacia (strain AMMD)).